The sequence spans 260 residues: Thiamine thiazole synthase (260 aa).

NAD(+) contacts are provided by residues A36, E55 to Q56, G63, and H154 to D156. 2 residues coordinate Fe cation: D156 and H171. NAD(+) is bound at residue M224. R234 contacts glycine.

Belongs to the THI4 family. In terms of assembly, homooctamer; tetramer of dimers. Requires Fe(2+) as cofactor.

The catalysed reaction is hydrogen sulfide + glycine + NAD(+) = ADP-5-ethyl-4-methylthiazole-2-carboxylate + nicotinamide + 3 H2O + H(+). Its pathway is cofactor biosynthesis; thiamine diphosphate biosynthesis. Functionally, involved in the biosynthesis of the thiazole moiety of thiamine. Catalyzes the conversion of NAD and glycine to adenosine diphosphate 5-(2-hydroxyethyl)-4-methylthiazole-2-carboxylate (ADT), an adenylated thiazole intermediate, using free sulfide as a source of sulfur. This Methanosarcina mazei (strain ATCC BAA-159 / DSM 3647 / Goe1 / Go1 / JCM 11833 / OCM 88) (Methanosarcina frisia) protein is Thiamine thiazole synthase.